Consider the following 586-residue polypeptide: Glutamate--tRNA ligase (586 aa).

Positions 84-111 (LTDIESEDTTDTYDLPSLPGVSDDEPTQ) are disordered. A compositionally biased stretch (acidic residues) spans 85-94 (TDIESEDTTD). Positions 119-129 (PNPNGPWHIGH) match the 'HIGH' region motif.

This sequence belongs to the class-I aminoacyl-tRNA synthetase family. Glutamate--tRNA ligase type 2 subfamily.

Its subcellular location is the cytoplasm. The catalysed reaction is tRNA(Glu) + L-glutamate + ATP = L-glutamyl-tRNA(Glu) + AMP + diphosphate. Catalyzes the attachment of glutamate to tRNA(Glu) in a two-step reaction: glutamate is first activated by ATP to form Glu-AMP and then transferred to the acceptor end of tRNA(Glu). This Haloquadratum walsbyi (strain DSM 16790 / HBSQ001) protein is Glutamate--tRNA ligase.